Here is a 928-residue protein sequence, read N- to C-terminus: Heme/hemopexin-binding protein (928 aa).

The first 21 residues, 1–21 (MYKLNVISLIILTTCSGAAYA), serve as a signal peptide directing secretion. Tandem repeats lie at residues 101–106 (NGKVYL), 149–154 (KDRQVL), 155–160 (KEGLVL), 161–166 (KDGQVV), 167–172 (KEGQVI), 205–210 (NGKVYL), 279–284 (NGKVVL), 410–415 (NGKVNL), 635–640 (NGFVHL), and 674–679 (NGKVSM). The tract at residues 101–679 (NGKVYLANPN…RLGMNGKVSM (579 aa)) is 6 X 6 AA approximate repeats. Positions 149–172 (KDRQVLKEGLVLKDGQVVKEGQVI) are 4 X 6 AA approximate tandem repeats.

The protein localises to the secreted. In terms of biological role, binds heme/hemopexin complexes. This is Heme/hemopexin-binding protein (hxuA) from Haemophilus influenzae.